The chain runs to 340 residues: Putative UPF0607 protein ENSP00000332738 (340 aa).

Over residues valine 75–valine 90 the composition is skewed to basic and acidic residues. Disordered stretches follow at residues valine 75 to proline 130 and glycine 215 to cysteine 281. Residues glutamate 91 to tyrosine 126 show a composition bias toward polar residues. Residues proline 228–alanine 241 are compositionally biased toward low complexity. The span at alanine 242–leucine 251 shows a compositional bias: basic residues. A compositionally biased stretch (low complexity) spans proline 254–leucine 266.

Belongs to the UPF0607 family.

The sequence is that of Putative UPF0607 protein ENSP00000332738 from Homo sapiens (Human).